The following is a 487-amino-acid chain: N-succinylglutamate 5-semialdehyde dehydrogenase (487 aa).

221–226 (GSSDTG) is a binding site for NAD(+). Catalysis depends on residues Glu244 and Cys278.

It belongs to the aldehyde dehydrogenase family. AstD subfamily.

The enzyme catalyses N-succinyl-L-glutamate 5-semialdehyde + NAD(+) + H2O = N-succinyl-L-glutamate + NADH + 2 H(+). It participates in amino-acid degradation; L-arginine degradation via AST pathway; L-glutamate and succinate from L-arginine: step 4/5. In terms of biological role, catalyzes the NAD-dependent reduction of succinylglutamate semialdehyde into succinylglutamate. In Burkholderia cenocepacia (strain HI2424), this protein is N-succinylglutamate 5-semialdehyde dehydrogenase.